The following is a 54-amino-acid chain: Large ribosomal subunit protein bL33 (54 aa).

This sequence belongs to the bacterial ribosomal protein bL33 family.

The chain is Large ribosomal subunit protein bL33 from Corynebacterium glutamicum (strain R).